Here is a 673-residue protein sequence, read N- to C-terminus: Probable urea active transporter 2 (673 aa).

A run of 14 helical transmembrane segments spans residues 8–28 (GYGYGFALGLGAAFALLMAII), 83–103 (IMGGFMYGVGGTIQITLFLFL), 132–152 (VYLFYCISTNVLVSSLLLLGG), 164–184 (TVAACFLLPLGVMVYTTLGGL), 196–218 (VMIYIILIVTCYTVYCSSSLIGS), 249–269 (MMYLTWSVMIGGLSSVFGDPG), 287–307 (LMGGLCWWIIPMALGSSAGLA), 336–356 (IYGMASIFGKSGAAAGLVMLF), 391–411 (QLVRTAHLSVIGFSLFIGALS), 424–446 (LLTFLGIILTPEVSAVTLCLFWN), 451–471 (FSLVVGAPFGTITGVVCWLAS), 492–512 (FVGNIVSMASSPLYIVLLSYI), 559–579 (IGINLFILIGCYVIIPTALLG), and 592–612 (LIIVCLIWILVAAIYIILFPL).

The protein belongs to the sodium:solute symporter (SSF) (TC 2.A.21) family.

The protein resides in the endoplasmic reticulum membrane. Its function is as follows. Involved in active transport of urea. This is Probable urea active transporter 2 (dur3-2) from Schizosaccharomyces pombe (strain 972 / ATCC 24843) (Fission yeast).